The sequence spans 217 residues: Phosphoenolpyruvate guanylyltransferase (217 aa).

Residues T150, G165, and S168 each contribute to the phosphoenolpyruvate site.

Belongs to the CofC family.

It catalyses the reaction phosphoenolpyruvate + GTP + H(+) = enolpyruvoyl-2-diphospho-5'-guanosine + diphosphate. Its pathway is cofactor biosynthesis; coenzyme F420 biosynthesis. Its function is as follows. Guanylyltransferase that catalyzes the activation of phosphoenolpyruvate (PEP) as enolpyruvoyl-2-diphospho-5'-guanosine, via the condensation of PEP with GTP. It is involved in the biosynthesis of coenzyme F420, a hydride carrier cofactor. The polypeptide is Phosphoenolpyruvate guanylyltransferase (Mycobacterium ulcerans (strain Agy99)).